The sequence spans 256 residues: Protein YIPF5 (256 aa).

Residues 1–125 (MSNFDNFNTD…ADGSIMNETD (125 aa)) are Cytoplasmic-facing. The helical transmembrane segment at 126–146 (LAGPMVFCLAFGATLLLAGKI) threads the bilayer. Q147 is a topological domain (lumenal). Residues 148-168 (FGYVYGISAMGCLGMYCLLNL) form a helical membrane-spanning segment. The Cytoplasmic portion of the chain corresponds to 169–172 (MSMT). Residues 173–193 (GVSFGCVSSVLGYCLLPMIIL) form a helical membrane-spanning segment. Topologically, residues 194 to 195 (ST) are lumenal. The chain crosses the membrane as a helical span at residues 196–216 (FAVIFSLQGILGIVLAALIIG). Topologically, residues 217–235 (WCSFSASKIFISALAMDGQ) are cytoplasmic. The helical transmembrane segment at 236-256 (QLLVAYPCALLYGVFALISVF) threads the bilayer.

Belongs to the YIP1 family.

Its subcellular location is the endoplasmic reticulum membrane. The protein localises to the golgi apparatus. It is found in the cis-Golgi network membrane. In terms of biological role, plays a role in transport between endoplasmic reticulum and Golgi. The protein is Protein YIPF5 (yipf5) of Xenopus laevis (African clawed frog).